Here is a 154-residue protein sequence, read N- to C-terminus: Yop proteins translocation protein O (154 aa).

A disordered region spans residues 132-154; that stretch reads ELNQQHYQEEQEQEEFLQHHRNA.

This sequence belongs to the SpaM family.

Its function is as follows. Component of the yop secretion machinery. The protein is Yop proteins translocation protein O (yscO) of Yersinia pseudotuberculosis serotype I (strain IP32953).